The chain runs to 74 residues: Cytochrome c oxidase assembly factor 5 (74 aa).

Residues 27 to 65 (QSDCVVQEGKSPRQCLKEGYCNSLKYAFFECKRSVLDNR) enclose the CHCH domain. The short motif at 30–41 (CVVQEGKSPRQC) is the Cx10C motif element. 2 disulfide bridges follow: Cys30/Cys57 and Cys41/Cys47. Ser37 carries the post-translational modification Phosphoserine. The Cx9C motif signature appears at 47 to 57 (CNSLKYAFFEC).

This sequence belongs to the PET191 family.

Its function is as follows. Involved in an early step of the mitochondrial complex IV assembly process. This is Cytochrome c oxidase assembly factor 5 (COA5) from Homo sapiens (Human).